Here is a 456-residue protein sequence, read N- to C-terminus: Antigen Lp49 (456 aa).

Positions 1–34 (MNSNPKKKFLKLIKIKSDIILLIPIFLFLVCCKS) are cleaved as a signal peptide. Cysteine 346 and cysteine 347 form a disulfide bridge.

The protein localises to the cell outer membrane. May be involved in virulence. Binds human plasminogen (PLG) and stimulates its proteolytic cleavage to enzymatically active plasmin in the presence of an urokinase-type PLG activator in vitro. Activated plasmin has proteolytic activity which may help the bacteria to spread throughout the host by degrading extracellular matrix components, facilitating tissue penetration and invasion. The sequence is that of Antigen Lp49 from Leptospira interrogans serogroup Icterohaemorrhagiae serovar copenhageni (strain Fiocruz L1-130).